A 130-amino-acid polypeptide reads, in one-letter code: Fumarate reductase subunit C (130 aa).

Helical transmembrane passes span 33 to 53, 60 to 80, and 109 to 129; these read AVTT…LKGG, FVTF…LLGA, and VIKL…GIAL.

The protein belongs to the FrdC family. In terms of assembly, part of an enzyme complex containing four subunits: a flavoprotein (FrdA), an iron-sulfur protein (FrdB), and two hydrophobic anchor proteins (FrdC and FrdD).

It is found in the cell inner membrane. Functionally, two distinct, membrane-bound, FAD-containing enzymes are responsible for the catalysis of fumarate and succinate interconversion; fumarate reductase is used in anaerobic growth, and succinate dehydrogenase is used in aerobic growth. Anchors the catalytic components of the fumarate reductase complex to the cell inner membrane, binds quinones. The chain is Fumarate reductase subunit C from Photorhabdus laumondii subsp. laumondii (strain DSM 15139 / CIP 105565 / TT01) (Photorhabdus luminescens subsp. laumondii).